A 215-amino-acid chain; its full sequence is Pre-hexon-linking protein VIII (215 aa).

Phosphothreonine; by host is present on Thr62. A propeptide spanning residues 110–150 (AWINYKNGSVRYEAPLQLAEEQVGGPLNAFAIKHQLQLAGG) is cleaved from the precursor.

It belongs to the adenoviridae hexon-linking protein family. As to quaternary structure, interacts with the peripentonal hexons as well as the hexons in the facets. Part of a complex composed of the core-capsid bridging protein, the endosome lysis protein VI and the hexon-linking protein VIII; these interactions bridge the virus core to the capsid. In terms of processing, cleaved by the viral protease during virion maturation. May cause the middle segment to be shed from the capsid.

It is found in the virion. The protein localises to the host nucleus. Its function is as follows. Structural component of the virion that acts as a cement protein on the capsid interior and which glue the peripentonal hexons and group-of-nine hexons together. The chain is Pre-hexon-linking protein VIII from Murine adenovirus A serotype 1 (MAdV-1).